The primary structure comprises 179 residues: MFSILKRTDHLEESFLKNPNDNLKELENIIIEQEEALRFSSLSYADCYSLGVIVRDLYAKAAYTAPIVIDITLNGHQVFHLAYDGSSPDNDAFIKRKYATVQRFRMSSMRMGLMMAQQGTTMPAKYDVPAEEYGAFGGGFPIKLTSGIQIGVFCISGLRQIQDHCLIARSIAEFLTTKQ.

It belongs to the UPF0303 family.

In Schizosaccharomyces pombe (strain 972 / ATCC 24843) (Fission yeast), this protein is UPF0303 protein P4H10.12.